The chain runs to 488 residues: Ribulose bisphosphate carboxylase large chain 1 (488 aa).

Residues Asn-127 and Thr-177 each contribute to the substrate site. Lys-179 functions as the Proton acceptor in the catalytic mechanism. Lys-181 lines the substrate pocket. Positions 205, 207, and 208 each coordinate Mg(2+). Position 205 is an N6-carboxylysine (Lys-205). His-297 acts as the Proton acceptor in catalysis. Substrate contacts are provided by Arg-298, His-330, and Ser-382.

Belongs to the RuBisCO large chain family. Type I subfamily. Heterohexadecamer of 8 large chains and 8 small chains. Mg(2+) serves as cofactor.

The catalysed reaction is 2 (2R)-3-phosphoglycerate + 2 H(+) = D-ribulose 1,5-bisphosphate + CO2 + H2O. The enzyme catalyses D-ribulose 1,5-bisphosphate + O2 = 2-phosphoglycolate + (2R)-3-phosphoglycerate + 2 H(+). Functionally, ruBisCO catalyzes two reactions: the carboxylation of D-ribulose 1,5-bisphosphate, the primary event in carbon dioxide fixation, as well as the oxidative fragmentation of the pentose substrate. Both reactions occur simultaneously and in competition at the same active site. The sequence is that of Ribulose bisphosphate carboxylase large chain 1 from Bradyrhizobium sp. (strain BTAi1 / ATCC BAA-1182).